The following is a 403-amino-acid chain: Probable tRNA sulfurtransferase (403 aa).

A THUMP domain is found at 60–165 (KLAEERLKPI…KEGVFLSCRT (106 aa)). Residues 183 to 184 (ML), 208 to 209 (HF), Arg-265, Gly-287, and Gln-296 contribute to the ATP site.

It belongs to the ThiI family.

The protein resides in the cytoplasm. The enzyme catalyses [ThiI sulfur-carrier protein]-S-sulfanyl-L-cysteine + a uridine in tRNA + 2 reduced [2Fe-2S]-[ferredoxin] + ATP + H(+) = [ThiI sulfur-carrier protein]-L-cysteine + a 4-thiouridine in tRNA + 2 oxidized [2Fe-2S]-[ferredoxin] + AMP + diphosphate. It catalyses the reaction [ThiS sulfur-carrier protein]-C-terminal Gly-Gly-AMP + S-sulfanyl-L-cysteinyl-[cysteine desulfurase] + AH2 = [ThiS sulfur-carrier protein]-C-terminal-Gly-aminoethanethioate + L-cysteinyl-[cysteine desulfurase] + A + AMP + 2 H(+). It functions in the pathway cofactor biosynthesis; thiamine diphosphate biosynthesis. In terms of biological role, catalyzes the ATP-dependent transfer of a sulfur to tRNA to produce 4-thiouridine in position 8 of tRNAs, which functions as a near-UV photosensor. Also catalyzes the transfer of sulfur to the sulfur carrier protein ThiS, forming ThiS-thiocarboxylate. This is a step in the synthesis of thiazole, in the thiamine biosynthesis pathway. The sulfur is donated as persulfide by IscS. In Listeria welshimeri serovar 6b (strain ATCC 35897 / DSM 20650 / CCUG 15529 / CIP 8149 / NCTC 11857 / SLCC 5334 / V8), this protein is Probable tRNA sulfurtransferase.